The following is a 167-amino-acid chain: Endoribonuclease YbeY (167 aa).

Zn(2+) contacts are provided by His131, His135, and His141.

The protein belongs to the endoribonuclease YbeY family. Zn(2+) is required as a cofactor.

The protein resides in the cytoplasm. Single strand-specific metallo-endoribonuclease involved in late-stage 70S ribosome quality control and in maturation of the 3' terminus of the 16S rRNA. The polypeptide is Endoribonuclease YbeY (Rickettsia felis (strain ATCC VR-1525 / URRWXCal2) (Rickettsia azadi)).